A 769-amino-acid polypeptide reads, in one-letter code: 5-methyltetrahydropteroyltriglutamate--homocysteine methyltransferase (769 aa).

Residues 16-19 (RELK) and lysine 121 contribute to the 5-methyltetrahydropteroyltri-L-glutamate site. Residues 415-450 (SMTERDSPHSSRSPLQREALDLPTLPTTTIGSFPQT) form a disordered region. The segment covering 439-449 (LPTTTIGSFPQ) has biased composition (polar residues). L-homocysteine is bound by residues 444-446 (IGS) and glutamate 497. L-methionine contacts are provided by residues 444-446 (IGS) and glutamate 497. Residues 528–529 (RC) and tryptophan 574 contribute to the 5-methyltetrahydropteroyltri-L-glutamate site. Aspartate 612 is a binding site for L-homocysteine. Residue aspartate 612 participates in L-methionine binding. 5-methyltetrahydropteroyltri-L-glutamate is bound at residue glutamate 618. 3 residues coordinate Zn(2+): histidine 654, cysteine 656, and glutamate 678. Histidine 707 (proton donor) is an active-site residue. Zn(2+) is bound at residue cysteine 739.

Belongs to the vitamin-B12 independent methionine synthase family. It depends on Zn(2+) as a cofactor.

The catalysed reaction is 5-methyltetrahydropteroyltri-L-glutamate + L-homocysteine = tetrahydropteroyltri-L-glutamate + L-methionine. The protein operates within amino-acid biosynthesis; L-methionine biosynthesis via de novo pathway; L-methionine from L-homocysteine (MetE route): step 1/1. Catalyzes the transfer of a methyl group from 5-methyltetrahydrofolate to homocysteine resulting in methionine formation. The sequence is that of 5-methyltetrahydropteroyltriglutamate--homocysteine methyltransferase from Salinibacter ruber (strain DSM 13855 / M31).